Here is a 2340-residue protein sequence, read N- to C-terminus: Proto-oncogene tyrosine-protein kinase ROS (2340 aa).

A signal peptide spans methionine 1 to serine 28. Residues threonine 29–serine 1854 lie on the Extracellular side of the membrane. N-linked (GlcNAc...) asparagine glycosylation is present at asparagine 53. 2 consecutive Fibronectin type-III domains span residues leucine 111 to threonine 206 and alanine 207 to serine 295. Asparagine 334 and asparagine 362 each carry an N-linked (GlcNAc...) asparagine glycan. In terms of domain architecture, Fibronectin type-III 3 spans leucine 567 to proline 667. 2 N-linked (GlcNAc...) asparagine glycosylation sites follow: asparagine 935 and asparagine 1011. Fibronectin type-III domains are found at residues isoleucine 943–serine 1038 and alanine 1039–isoleucine 1146. N-linked (GlcNAc...) asparagine glycosylation occurs at asparagine 1243. Fibronectin type-III domains are found at residues alanine 1442–glycine 1549, valine 1550–phenylalanine 1649, threonine 1651–glycine 1744, and valine 1745–aspartate 1846. Asparagine 1676 is a glycosylation site (N-linked (GlcNAc...) asparagine). The helical transmembrane segment at phenylalanine 1855 to tryptophan 1875 threads the bilayer. The Cytoplasmic portion of the chain corresponds to histidine 1876–glutamate 2340. In terms of domain architecture, Protein kinase spans leucine 1938–leucine 2216. Residues leucine 1944 to valine 1952 and lysine 1973 contribute to the ATP site. Aspartate 2072 (proton acceptor) is an active-site residue. Tyrosine 2267 and tyrosine 2327 each carry phosphotyrosine; by autocatalysis.

This sequence belongs to the protein kinase superfamily. Tyr protein kinase family. Insulin receptor subfamily. As to quaternary structure, interacts with PTPN11; may activate the PI3 kinase-mTOR signaling pathway. Interacts with VAV3; constitutive interaction mediating VAV3 phosphorylation. Interacts with PTPN6 (via SH2 1 domain); the interaction is direct and promotes ROS1 dephosphorylation. In terms of processing, phosphorylated. Probably autophosphorylates. Phosphorylation at Tyr-2267 and/or Tyr-2327 recruits PTPN11. Phosphorylation at Tyr-2267 is required for the interaction with PTPN6 that mediates ROS1 dephosphorylation. Phosphorylation at Tyr-2267 stimulates the kinase activity and the activation of the ERK1 signaling cascade. As to expression, expressed by epithelial cells of the caput epididymis (at protein level).

The protein resides in the cell membrane. It catalyses the reaction L-tyrosyl-[protein] + ATP = O-phospho-L-tyrosyl-[protein] + ADP + H(+). Inhibited by dephosphorylation by PTPN6. Its function is as follows. Receptor tyrosine kinase (RTK) that plays a role in epithelial cell differentiation and regionalization of the proximal epididymal epithelium. NELL2 is an endogenous ligand for ROS1. Upon endogenous stimulation by NELL2, ROS1 activates the intracellular signaling pathway and triggers epididymal epithelial differentiation and subsequent sperm maturation. May activate several downstream signaling pathways related to cell differentiation, proliferation, growth and survival including the PI3 kinase-mTOR signaling pathway. Mediates the phosphorylation of PTPN11, an activator of this pathway. May also phosphorylate and activate the transcription factor STAT3 to control anchorage-independent cell growth. Mediates the phosphorylation and the activation of VAV3, a guanine nucleotide exchange factor regulating cell morphology. May activate other downstream signaling proteins including AKT1, MAPK1, MAPK3, IRS1, and PLCG2. The sequence is that of Proto-oncogene tyrosine-protein kinase ROS (Ros1) from Mus musculus (Mouse).